Consider the following 420-residue polypeptide: Serine hydroxymethyltransferase (420 aa).

(6S)-5,6,7,8-tetrahydrofolate-binding positions include leucine 121 and 125–127 (GHL). Lysine 230 carries the post-translational modification N6-(pyridoxal phosphate)lysine. 355–357 (SPF) lines the (6S)-5,6,7,8-tetrahydrofolate pocket.

Belongs to the SHMT family. In terms of assembly, homodimer. It depends on pyridoxal 5'-phosphate as a cofactor.

The protein localises to the cytoplasm. It catalyses the reaction (6R)-5,10-methylene-5,6,7,8-tetrahydrofolate + glycine + H2O = (6S)-5,6,7,8-tetrahydrofolate + L-serine. It participates in one-carbon metabolism; tetrahydrofolate interconversion. It functions in the pathway amino-acid biosynthesis; glycine biosynthesis; glycine from L-serine: step 1/1. Functionally, catalyzes the reversible interconversion of serine and glycine with tetrahydrofolate (THF) serving as the one-carbon carrier. This reaction serves as the major source of one-carbon groups required for the biosynthesis of purines, thymidylate, methionine, and other important biomolecules. Also exhibits THF-independent aldolase activity toward beta-hydroxyamino acids, producing glycine and aldehydes, via a retro-aldol mechanism. The polypeptide is Serine hydroxymethyltransferase (Streptococcus gordonii (strain Challis / ATCC 35105 / BCRC 15272 / CH1 / DL1 / V288)).